The chain runs to 237 residues: Small ribosomal subunit protein uS3 (237 aa).

The region spanning 39 to 107 is the KH type-2 domain; sequence IRAYLMEELK…ETHLNIVEVR (69 aa). A disordered region spans residues 213–237; the sequence is MASERRATESDNQGGGGRDRRRENA.

This sequence belongs to the universal ribosomal protein uS3 family. In terms of assembly, part of the 30S ribosomal subunit. Forms a tight complex with proteins S10 and S14.

Binds the lower part of the 30S subunit head. Binds mRNA in the 70S ribosome, positioning it for translation. This is Small ribosomal subunit protein uS3 from Sinorhizobium fredii (strain NBRC 101917 / NGR234).